Reading from the N-terminus, the 143-residue chain is Large ribosomal subunit protein bL17 (143 aa).

Over residues 124–133 (GAGDRARLEA) the composition is skewed to basic and acidic residues. A disordered region spans residues 124-143 (GAGDRARLEAEGTDAEAAAA).

Belongs to the bacterial ribosomal protein bL17 family. Part of the 50S ribosomal subunit. Contacts protein L32.

The protein is Large ribosomal subunit protein bL17 of Mesorhizobium japonicum (strain LMG 29417 / CECT 9101 / MAFF 303099) (Mesorhizobium loti (strain MAFF 303099)).